The sequence spans 315 residues: Transcription factor MafAa (315 aa).

Residues 52–104 (STPISTPCSSVPSSPSFCAPSPGSQPGQNLVNGVNNNNNNSGNGNNNTQGSSG) are compositionally biased toward low complexity. Disordered regions lie at residues 52 to 108 (STPI…KPQM) and 169 to 191 (ATNG…AHAR). The segment covering 172–189 (GHHHPVHHHHHHHGHHAH) has biased composition (basic residues). The tract at residues 223–248 (RLKQKRRTLKNRGYAQSCRYKRVQQR) is basic motif. Residues 223-286 (RLKQKRRTLK…DLYKEKYEKL (64 aa)) form the bZIP domain. The segment at 229–243 (RTLKNRGYAQSCRYK) is interaction with DNA. The interval 251-272 (LESEKCTLQSQVEQLKQDVARL) is leucine-zipper. The tract at residues 290 to 315 (AFNGGGNTRDPSSGNHVKTTSTDFFM) is disordered. Positions 298-315 (RDPSSGNHVKTTSTDFFM) are enriched in polar residues.

It belongs to the bZIP family. Maf subfamily.

It localises to the nucleus. Functionally, transcription factor, possibly involved in transcription regulation during lens development, including that of crystallin genes. Specifically binds to the alphaCE2 enhancer element of crystallin gene. The protein is Transcription factor MafAa (mafaa) of Danio rerio (Zebrafish).